The chain runs to 642 residues: Zinc finger protein 14 (642 aa).

Positions 4–76 constitute a KRAB domain; it reads VSFEDVAVNF…MVERLCESRR (73 aa). The C2H2-type 1 zinc finger occupies 103–125; it reads HECSFCGRDFIHHSSLNRHMRSH. The C2H2-type 2; degenerate zinc-finger motif lies at 141–163; it reads CKCKAVGKTFSYHHCFRKHERTH. The segment at 169-191 adopts a C2H2-type 3 zinc-finger fold; that stretch reads YECKQCGKAFIYYQPFQRHERTH. A C2H2-type 4; atypical zinc finger spans residues 197–217; it reads YECKQCGKTFIYYQSFQKHAH. C2H2-type zinc fingers lie at residues 223 to 245, 251 to 273, 279 to 301, 307 to 329, 335 to 357, 363 to 385, 391 to 413, 419 to 441, 447 to 469, 475 to 497, 503 to 525, 531 to 553, 559 to 581, 587 to 609, and 615 to 637; these read YECK…KRTH, YECK…ERTH, YKCK…KRTH, YECK…VIIH, YKCK…ERTH, YECK…ETTH, YECK…ERSH, YECK…EKIH, FECK…ERTH, YQCK…ERTH, and YRCK…ERSH.

Belongs to the krueppel C2H2-type zinc-finger protein family.

It is found in the nucleus. Its function is as follows. May be involved in transcriptional regulation. The sequence is that of Zinc finger protein 14 (ZNF14) from Homo sapiens (Human).